Consider the following 485-residue polypeptide: MRSRVAVRACHKVCRCLLSGFGGRVDAGQPELLTERSSPKGGHVKSHAELEGNGEHPEAPGSGEGSEALLEICQRRHFLSGSKQQLSRDSLLSGCHPGFGPLGVELRKNLAAEWWTSVVVFREQVFPVDALHHKPGPLLPGDSAFRLVSAETLREILQDKELSKEQLVAFLENVLKTSGKLRENLLHGALEHYVNCLDLVNKRLPYGLAQIGVCFHPVFDTKQIRNGVKSIGEKTEASLVWFTPPRTSNQWLDFWLRHRLQWWRKFAMSPSNFSSSDCQDEEGRKGNKLYYNFPWGKELIETLWNLGDHELLHMYPGNVSKLHGRDGRKNVVPCVLSVNGDLDRGMLAYLYDSFQLTENSFTRKKNLHRKVLKLHPCLAPIKVALDVGRGPTLELRQVCQGLFNELLENGISVWPGYLETMQSSLEQLYSKYDEMSILFTVLVTETTLENGLIHLRSRDTTMKEMMHISKLKDFLIKYISSAKNV.

The segment at 28–65 (GQPELLTERSSPKGGHVKSHAELEGNGEHPEAPGSGEG) is disordered. Residue Ser38 is modified to Phosphoserine. Basic and acidic residues predominate over residues 46-58 (SHAELEGNGEHPE).

As to quaternary structure, heterotrimer composed of a catalytic subunit and a homodimer of accessory subunits (POLG:POLG2).

It is found in the mitochondrion. It localises to the mitochondrion matrix. Its subcellular location is the mitochondrion nucleoid. Functionally, accessory subunit of DNA polymerase gamma solely responsible for replication of mitochondrial DNA (mtDNA). Acts as an allosteric regulator of the holoenzyme activities. Enhances the polymerase activity and the processivity of POLG by increasing its interactions with the DNA template. Suppresses POLG exonucleolytic proofreading especially toward homopolymeric templates bearing mismatched termini. Binds to single-stranded DNA. This chain is DNA polymerase subunit gamma-2, found in Homo sapiens (Human).